The following is a 384-amino-acid chain: Carbamoyl phosphate synthase small chain (384 aa).

Positions 1 to 192 (MMKRIPAILV…LTDNIRVHRV (192 aa)) are CPSase. Residues Ser-51, Gly-244, and Gly-246 each coordinate L-glutamine. A Glutamine amidotransferase type-1 domain is found at 196–382 (KVIVIDFGVK…IEIMTKSKNK (187 aa)). The active-site Nucleophile is the Cys-272. Residues Met-273, Gln-276, Asn-312, Gly-314, and Phe-315 each contribute to the L-glutamine site. Residues His-355 and Glu-357 contribute to the active site.

This sequence belongs to the CarA family. Composed of two chains; the small (or glutamine) chain promotes the hydrolysis of glutamine to ammonia, which is used by the large (or ammonia) chain to synthesize carbamoyl phosphate. Tetramer of heterodimers (alpha,beta)4.

Its subcellular location is the plastid. It localises to the chloroplast. The enzyme catalyses hydrogencarbonate + L-glutamine + 2 ATP + H2O = carbamoyl phosphate + L-glutamate + 2 ADP + phosphate + 2 H(+). It catalyses the reaction L-glutamine + H2O = L-glutamate + NH4(+). The protein operates within amino-acid biosynthesis; L-arginine biosynthesis; carbamoyl phosphate from bicarbonate: step 1/1. It participates in pyrimidine metabolism; UMP biosynthesis via de novo pathway; (S)-dihydroorotate from bicarbonate: step 1/3. Small subunit of the glutamine-dependent carbamoyl phosphate synthetase (CPSase). CPSase catalyzes the formation of carbamoyl phosphate from the ammonia moiety of glutamine, carbonate, and phosphate donated by ATP, constituting the first step of 2 biosynthetic pathways, one leading to arginine and/or urea and the other to pyrimidine nucleotides. The small subunit (glutamine amidotransferase) binds and cleaves glutamine to supply the large subunit with the substrate ammonia. The sequence is that of Carbamoyl phosphate synthase small chain from Pyropia yezoensis (Susabi-nori).